The following is a 650-amino-acid chain: DNA gyrase subunit B (650 aa).

Over residues arginine 400–proline 414 the composition is skewed to basic and acidic residues. The segment at arginine 400–glycine 422 is disordered. A Toprim domain is found at serine 435–proline 549. 3 residues coordinate Mg(2+): glutamate 441, aspartate 514, and aspartate 516.

The protein belongs to the type II topoisomerase GyrB family. As to quaternary structure, heterotetramer, composed of two GyrA and two GyrB chains. In the heterotetramer, GyrA contains the active site tyrosine that forms a transient covalent intermediate with DNA, while GyrB binds cofactors and catalyzes ATP hydrolysis. It depends on Mg(2+) as a cofactor. Requires Mn(2+) as cofactor. Ca(2+) serves as cofactor.

Its subcellular location is the cytoplasm. It carries out the reaction ATP-dependent breakage, passage and rejoining of double-stranded DNA.. Its function is as follows. A type II topoisomerase that negatively supercoils closed circular double-stranded (ds) DNA in an ATP-dependent manner to modulate DNA topology and maintain chromosomes in an underwound state. Negative supercoiling favors strand separation, and DNA replication, transcription, recombination and repair, all of which involve strand separation. Also able to catalyze the interconversion of other topological isomers of dsDNA rings, including catenanes and knotted rings. Type II topoisomerases break and join 2 DNA strands simultaneously in an ATP-dependent manner. This Mycoplasma genitalium (strain ATCC 33530 / DSM 19775 / NCTC 10195 / G37) (Mycoplasmoides genitalium) protein is DNA gyrase subunit B.